A 319-amino-acid polypeptide reads, in one-letter code: Phenoxybenzoate dioxygenase subunit beta (319 aa).

The FAD-binding FR-type domain maps to 7 to 109; it reads MAPVSLRIHA…DGPSNHFALD (103 aa). 113-223 serves as a coordination point for NAD(+); the sequence is PHAVFIAGGI…PARVHLEYFA (111 aa). Residues 234-319 form the 2Fe-2S ferredoxin-type domain; sequence FVVHLARSGR…SKTAELTLDL (86 aa). Residues C268, C273, C276, and C306 each coordinate [2Fe-2S] cluster.

This sequence belongs to the PDR/VanB family. As to quaternary structure, this dioxygenase system consists of two proteins: the alpha subunit (PobA) and a subunit (PobB) that acts as a ferredoxin and a ferredoxin reductase. Requires FMN as cofactor.

It functions in the pathway aromatic compound metabolism; carboxydiphenyl ether degradation. Functionally, degrades exclusively diarylether compounds having carboxyl groups in the 3- or 4-position. Yields a hemiacetal that spontaneously hydrolyzes to phenol and protocatechuate. The chain is Phenoxybenzoate dioxygenase subunit beta (pobB) from Ectopseudomonas oleovorans (Pseudomonas oleovorans).